A 591-amino-acid polypeptide reads, in one-letter code: L-fucose isomerase (591 aa).

Catalysis depends on proton acceptor residues glutamate 337 and aspartate 361. Residues glutamate 337, aspartate 361, and histidine 528 each contribute to the Mn(2+) site.

This sequence belongs to the L-fucose isomerase family. Homohexamer. Mn(2+) is required as a cofactor.

The protein resides in the cytoplasm. It catalyses the reaction L-fucose = L-fuculose. The protein operates within carbohydrate degradation; L-fucose degradation; L-lactaldehyde and glycerone phosphate from L-fucose: step 1/3. Functionally, converts the aldose L-fucose into the corresponding ketose L-fuculose. The sequence is that of L-fucose isomerase from Salmonella heidelberg (strain SL476).